The following is a 113-amino-acid chain: Large ribosomal subunit protein bL20c (113 aa).

The protein belongs to the bacterial ribosomal protein bL20 family.

It is found in the plastid. Its subcellular location is the chloroplast. Functionally, binds directly to 23S ribosomal RNA and is necessary for the in vitro assembly process of the 50S ribosomal subunit. It is not involved in the protein synthesizing functions of that subunit. This is Large ribosomal subunit protein bL20c from Nephroselmis olivacea (Green alga).